The sequence spans 887 residues: Multiple RNA-binding domain-containing protein 1 (887 aa).

The RRM 1 domain maps to 2-94 (SRIIVKGLPV…SKIEVSMAKS (93 aa)). Disordered stretches follow at residues 121-143 (KLLQ…NIDD), 203-276 (KEEN…RNLA), and 297-336 (SEAE…DEEL). Phosphoserine occurs at positions 220 and 264. Basic and acidic residues predominate over residues 264–276 (SDEKENEKRRNLA). Positions 306 to 315 (SSYATEQNES) are enriched in polar residues. Basic and acidic residues predominate over residues 316-325 (LDTKKEEQPE). 4 consecutive RRM domains span residues 345–423 (GRLF…PGEE), 532–604 (KVIL…RGPK), 663–746 (VSIF…LSHR), and 763–840 (GKII…YAEE). Residues 864 to 887 (EMAALRNGGGRKKLDVDDEENEGF) form a disordered region.

The protein belongs to the RRM MRD1 family. Interacts with NOP1. Binds to the 35S pre-rRNA and the U3 snoRNA.

The protein localises to the nucleus. Its function is as follows. Involved in pre-rRNA processing. Required for maintaining steady-state levels of 40S ribosomal subunit. Required for the initial processing of pre-rRNA at the A0 to A2 sites, leading to the processing of the 23S pre-rRNA intermediate to the 18S rRNA. This is Multiple RNA-binding domain-containing protein 1 (MRD1) from Saccharomyces cerevisiae (strain ATCC 204508 / S288c) (Baker's yeast).